Here is a 378-residue protein sequence, read N- to C-terminus: Phospho-N-acetylmuramoyl-pentapeptide-transferase (378 aa).

11 helical membrane passes run Leu-26–Asn-46, Leu-57–Leu-77, Met-103–Ala-123, Leu-127–Trp-147, Gly-171–Val-191, Trp-195–Ala-215, Gly-225–Leu-245, Pro-247–Trp-267, Val-275–Ala-295, Leu-302–Tyr-322, and Ile-356–Trp-376.

Belongs to the glycosyltransferase 4 family. MraY subfamily. It depends on Mg(2+) as a cofactor.

The protein localises to the cell inner membrane. It catalyses the reaction UDP-N-acetyl-alpha-D-muramoyl-L-alanyl-gamma-D-glutamyl-meso-2,6-diaminopimeloyl-D-alanyl-D-alanine + di-trans,octa-cis-undecaprenyl phosphate = di-trans,octa-cis-undecaprenyl diphospho-N-acetyl-alpha-D-muramoyl-L-alanyl-D-glutamyl-meso-2,6-diaminopimeloyl-D-alanyl-D-alanine + UMP. The protein operates within cell wall biogenesis; peptidoglycan biosynthesis. Its function is as follows. Catalyzes the initial step of the lipid cycle reactions in the biosynthesis of the cell wall peptidoglycan: transfers peptidoglycan precursor phospho-MurNAc-pentapeptide from UDP-MurNAc-pentapeptide onto the lipid carrier undecaprenyl phosphate, yielding undecaprenyl-pyrophosphoryl-MurNAc-pentapeptide, known as lipid I. The sequence is that of Phospho-N-acetylmuramoyl-pentapeptide-transferase from Thermosynechococcus vestitus (strain NIES-2133 / IAM M-273 / BP-1).